We begin with the raw amino-acid sequence, 122 residues long: Selenoprotein H (122 aa).

Lys20 is subject to N6-acetyllysine. The segment at residues 41-44 (CTSU) is a cross-link (cysteinyl-selenocysteine (Cys-Sec); redox-active). Residue Sec44 is a non-standard amino acid, selenocysteine.

The protein belongs to the SelWTH family.

Its function is as follows. May be involved in a redox-related process. In Homo sapiens (Human), this protein is Selenoprotein H.